Here is a 113-residue protein sequence, read N- to C-terminus: Large ribosomal subunit protein uL22 (113 aa).

It belongs to the universal ribosomal protein uL22 family. In terms of assembly, part of the 50S ribosomal subunit.

This protein binds specifically to 23S rRNA; its binding is stimulated by other ribosomal proteins, e.g. L4, L17, and L20. It is important during the early stages of 50S assembly. It makes multiple contacts with different domains of the 23S rRNA in the assembled 50S subunit and ribosome. Its function is as follows. The globular domain of the protein is located near the polypeptide exit tunnel on the outside of the subunit, while an extended beta-hairpin is found that lines the wall of the exit tunnel in the center of the 70S ribosome. The chain is Large ribosomal subunit protein uL22 from Syntrophomonas wolfei subsp. wolfei (strain DSM 2245B / Goettingen).